Consider the following 161-residue polypeptide: uncharacterized protein (161 aa).

Residues 1–29 (MTLYDTVKELQEKLRNGEIEINTFLERLG) are a coiled coil.

This is an uncharacterized protein from Acidianus convivator (ATV).